A 201-amino-acid chain; its full sequence is Ribonuclease HII (201 aa).

The region spanning 14–201 (NLIAGVDEVG…KPVKRILGIE (188 aa)) is the RNase H type-2 domain. A divalent metal cation is bound by residues Asp20, Glu21, and Asp112.

Belongs to the RNase HII family. Mn(2+) serves as cofactor. The cofactor is Mg(2+).

The protein localises to the cytoplasm. The enzyme catalyses Endonucleolytic cleavage to 5'-phosphomonoester.. Its function is as follows. Endonuclease that specifically degrades the RNA of RNA-DNA hybrids. The sequence is that of Ribonuclease HII from Photobacterium profundum (strain SS9).